The following is a 115-amino-acid chain: Insulin-like peptide IlO1_i1 (115 aa).

A signal peptide spans 1 to 20 (MFVYTTIMLLLLAEINHSQG). Cystine bridges form between Cys-40-Cys-101, Cys-52-Cys-114, and Cys-100-Cys-105. Residues 59–93 (RRNRITGLDQRSIFESNLLAKRFLISRRQIVNNRR) constitute a propeptide, c peptide.

The protein belongs to the insulin family. Expressed in tentacles.

The protein resides in the secreted. Its function is as follows. Heterodimer with unknown function. Surprisingly, the truncated synthetic analog (dimer of 27-58 and 94-115) does not bind to long insulin receptor (HIR-B) and insulin-like growth factor 1 receptor. This truncated synthetic analog shows very weak inhibitory activity on different voltage-gated channels. The protein is Insulin-like peptide IlO1_i1 of Oulactis sp. (Sea anemone).